The sequence spans 347 residues: MNPLAQPIIYSTIFAGTFITVLSSHWFFTWVGLEMNMLAFIPVLTKKMSPRSTEAAIKYFLTQATASMILLMAILSNNMLSGQWTMTNTTNQYSSLMIMTAMAMKLGMAPFHFWVPEVTQGTPLMSGLLLLTWQKLAPISIMYQMSSSLNVNLLLTLSILSIMAGSWGGLNQTQLRKILAYSSITHMGWMMAVLPYNPNMTILNLTIYIILTTTTFLLLNLNSSTTTLLLSRTWNKLTWLTPLIPSTLLSLGGLPPLTGFLPKWVIIEEFTKNNSLIIPTTMAIITLLNLYFYLRLIYSTSITLLPMSNNVKMKWQFEHTKPTPFLPTLITLTTLLLPISPFMLMIL.

10 helical membrane-spanning segments follow: residues 13–33 (IFAG…WVGL), 55–75 (AAIK…MAIL), 96–116 (LMIM…FWVP), 123–143 (PLMS…SIMY), 149–169 (LNVN…SWGG), 178–198 (ILAY…PYNP), 201–221 (TILN…LLNL), 247–267 (TLLS…WVII), 274–294 (NSLI…YFYL), and 326–346 (LPTL…MLMI).

It belongs to the complex I subunit 2 family. As to quaternary structure, core subunit of respiratory chain NADH dehydrogenase (Complex I) which is composed of 45 different subunits. Interacts with TMEM242.

The protein resides in the mitochondrion inner membrane. It catalyses the reaction a ubiquinone + NADH + 5 H(+)(in) = a ubiquinol + NAD(+) + 4 H(+)(out). Functionally, core subunit of the mitochondrial membrane respiratory chain NADH dehydrogenase (Complex I) which catalyzes electron transfer from NADH through the respiratory chain, using ubiquinone as an electron acceptor. Essential for the catalytic activity and assembly of complex I. This chain is NADH-ubiquinone oxidoreductase chain 2, found in Pan paniscus (Pygmy chimpanzee).